Reading from the N-terminus, the 882-residue chain is Alanine--tRNA ligase (882 aa).

Residues H564, H568, C666, and H670 each contribute to the Zn(2+) site.

It belongs to the class-II aminoacyl-tRNA synthetase family. Zn(2+) is required as a cofactor.

It localises to the cytoplasm. The enzyme catalyses tRNA(Ala) + L-alanine + ATP = L-alanyl-tRNA(Ala) + AMP + diphosphate. Catalyzes the attachment of alanine to tRNA(Ala) in a two-step reaction: alanine is first activated by ATP to form Ala-AMP and then transferred to the acceptor end of tRNA(Ala). Also edits incorrectly charged Ser-tRNA(Ala) and Gly-tRNA(Ala) via its editing domain. The polypeptide is Alanine--tRNA ligase (Rubrobacter xylanophilus (strain DSM 9941 / JCM 11954 / NBRC 16129 / PRD-1)).